A 157-amino-acid chain; its full sequence is Ribosomal RNA large subunit methyltransferase H (157 aa).

S-adenosyl-L-methionine is bound by residues L73, G105, and 124–129; that span reads MSKMTF.

Belongs to the RNA methyltransferase RlmH family. In terms of assembly, homodimer.

The protein localises to the cytoplasm. The enzyme catalyses pseudouridine(1915) in 23S rRNA + S-adenosyl-L-methionine = N(3)-methylpseudouridine(1915) in 23S rRNA + S-adenosyl-L-homocysteine + H(+). Its function is as follows. Specifically methylates the pseudouridine at position 1915 (m3Psi1915) in 23S rRNA. The polypeptide is Ribosomal RNA large subunit methyltransferase H (Bacteroides fragilis (strain ATCC 25285 / DSM 2151 / CCUG 4856 / JCM 11019 / LMG 10263 / NCTC 9343 / Onslow / VPI 2553 / EN-2)).